A 352-amino-acid chain; its full sequence is MEGIAARGVDVRSRAKQYEKLDFLGEGQFATVYKARDKNTDRIVAIKKIKLGHRAEANDGINRTALREIKLLQELSHPNIIGLLDAFGHKSNISLVFDFMETDLEVIIKDTSLVLTPAHIKSYMLMTLQGLEYLHHLWILHRDLKPNNLLLDENGVLKLADFGLAKSFGSPNRIYTHQVVTRWYRSPELLFGARMYGVGVDMWAVGCILAELLLRVPFLPGDSDLDQLTRIFETLGTPTEEQWPGMSSLPDYVAFKSFPGTPLHLIFIAAGDDLLELLQGLFTFNPCARCTASQALRKRYFSNRPAPTPGNLLPRPNCSIEALKEQQNLNLGIKRKRTEGMDQKDIAKKLSF.

The Protein kinase domain maps to 18 to 301; the sequence is YEKLDFLGEG…ASQALRKRYF (284 aa). ATP contacts are provided by residues 24–32 and K47; that span reads LGEGQFATV. D143 (proton acceptor) is an active-site residue. The residue at position 170 (S170) is a Phosphoserine; by CDK1 and CDK2. T176 carries the post-translational modification Phosphothreonine; by CDK2.

It belongs to the protein kinase superfamily. CMGC Ser/Thr protein kinase family. CDC2/CDKX subfamily. In terms of assembly, probably associates with cyclin-H (ccnh) and mat1 to form a multimeric active enzyme. Phosphorylation of Ser-170 during mitosis inactivates the enzyme. Phosphorylation of Thr-176 is required for activity. Phosphorylated at Ser-170 and Thr-176 by CDK2.

Its subcellular location is the nucleus. It carries out the reaction L-seryl-[protein] + ATP = O-phospho-L-seryl-[protein] + ADP + H(+). It catalyses the reaction L-threonyl-[protein] + ATP = O-phospho-L-threonyl-[protein] + ADP + H(+). The enzyme catalyses [DNA-directed RNA polymerase] + ATP = phospho-[DNA-directed RNA polymerase] + ADP + H(+). With respect to regulation, phosphorylation at Thr-176 is required for enzymatic activity. Its function is as follows. Serine/threonine kinase involved in cell cycle control and in RNA polymerase II-mediated RNA transcription. Cyclin-dependent kinases (CDKs) are activated by the binding to a cyclin and mediate the progression through the cell cycle. Each different complex controls a specific transition between 2 subsequent phases in the cell cycle. Required for both activation and complex formation of cdk1/cyclin-B during G2-M transition, and for activation of cdk2/cyclins during G1-S transition (but not complex formation). cdk7 is the catalytic subunit of the CDK-activating kinase (CAK) complex. CAK activates the cyclin-associated kinases cdk1, cdk2, cdk4 and cdk6 by threonine phosphorylation, thus regulating cell cycle progression. Initiates transcription by RNA polymerase II by mediating phosphorylation of polr2a at 'Ser-5' of the repetitive C-terminal domain (CTD) when polr2a is in complex with DNA, promoting dissociation from DNA and initiation. CAK complexed to the core-TFIIH basal transcription factor activates RNA polymerase II by serine phosphorylation of the CTD of polr2a, allowing its escape from the promoter and elongation of the transcripts. In Xenopus laevis (African clawed frog), this protein is Cyclin-dependent kinase 7 (cdk7).